A 371-amino-acid polypeptide reads, in one-letter code: Peptide chain release factor 2 (371 aa).

The residue at position 247 (Gln-247) is an N5-methylglutamine.

It belongs to the prokaryotic/mitochondrial release factor family. Methylated by PrmC. Methylation increases the termination efficiency of RF2.

Its subcellular location is the cytoplasm. Peptide chain release factor 2 directs the termination of translation in response to the peptide chain termination codons UGA and UAA. The polypeptide is Peptide chain release factor 2 (Caulobacter vibrioides (strain ATCC 19089 / CIP 103742 / CB 15) (Caulobacter crescentus)).